A 90-amino-acid chain; its full sequence is Probable Fe(2+)-trafficking protein (90 aa).

It belongs to the Fe(2+)-trafficking protein family.

Its function is as follows. Could be a mediator in iron transactions between iron acquisition and iron-requiring processes, such as synthesis and/or repair of Fe-S clusters in biosynthetic enzymes. The polypeptide is Probable Fe(2+)-trafficking protein (Actinobacillus succinogenes (strain ATCC 55618 / DSM 22257 / CCUG 43843 / 130Z)).